Here is a 755-residue protein sequence, read N- to C-terminus: Cellulose synthase-like protein B3 (755 aa).

2 helical membrane passes run 24–44 and 51–71; these read VVDL…ILLM and WVVA…ITSI. Catalysis depends on residues Asp136 and Asp461. 6 consecutive transmembrane segments (helical) span residues 534 to 556, 569 to 589, 615 to 635, 674 to 694, 702 to 722, and 733 to 753; these read YLYI…LPAY, VYLG…LWEF, LFSI…VFIV, FLPG…CSVG, GSGL…LPFL, and IPWS…VFSV.

The protein belongs to the glycosyltransferase 2 family. Plant cellulose synthase-like B subfamily. Expressed in young seedlings, primarily in the vascular tissue.

The protein resides in the golgi apparatus membrane. Thought to be a Golgi-localized beta-glycan synthase that polymerize the backbones of noncellulosic polysaccharides (hemicelluloses) of plant cell wall. This chain is Cellulose synthase-like protein B3 (CSLB3), found in Arabidopsis thaliana (Mouse-ear cress).